The following is an 87-amino-acid chain: Small ribosomal subunit protein uS15c (87 aa).

Belongs to the universal ribosomal protein uS15 family. As to quaternary structure, part of the 30S ribosomal subunit.

It is found in the plastid. Its subcellular location is the chloroplast. The protein is Small ribosomal subunit protein uS15c (rps15) of Oenothera argillicola (Appalachian evening primrose).